The primary structure comprises 106 residues: Large ribosomal subunit protein uL30 (106 aa).

Belongs to the universal ribosomal protein uL30 family. As to quaternary structure, part of the 50S ribosomal subunit.

The sequence is that of Large ribosomal subunit protein uL30 from Ruthia magnifica subsp. Calyptogena magnifica.